Reading from the N-terminus, the 190-residue chain is dTTP/UTP pyrophosphatase (190 aa).

Asp67 serves as the catalytic Proton acceptor.

Belongs to the Maf family. YhdE subfamily. It depends on a divalent metal cation as a cofactor.

The protein resides in the cytoplasm. It catalyses the reaction dTTP + H2O = dTMP + diphosphate + H(+). It carries out the reaction UTP + H2O = UMP + diphosphate + H(+). Functionally, nucleoside triphosphate pyrophosphatase that hydrolyzes dTTP and UTP. May have a dual role in cell division arrest and in preventing the incorporation of modified nucleotides into cellular nucleic acids. This Aquifex aeolicus (strain VF5) protein is dTTP/UTP pyrophosphatase.